The sequence spans 321 residues: Lipoyl synthase (321 aa).

Residues C68, C73, C79, C94, C98, C101, and S308 each coordinate [4Fe-4S] cluster. Positions 80 to 297 (FNHGTATFMI…KAYADEIGFT (218 aa)) constitute a Radical SAM core domain.

It belongs to the radical SAM superfamily. Lipoyl synthase family. It depends on [4Fe-4S] cluster as a cofactor.

It localises to the cytoplasm. It carries out the reaction [[Fe-S] cluster scaffold protein carrying a second [4Fe-4S](2+) cluster] + N(6)-octanoyl-L-lysyl-[protein] + 2 oxidized [2Fe-2S]-[ferredoxin] + 2 S-adenosyl-L-methionine + 4 H(+) = [[Fe-S] cluster scaffold protein] + N(6)-[(R)-dihydrolipoyl]-L-lysyl-[protein] + 4 Fe(3+) + 2 hydrogen sulfide + 2 5'-deoxyadenosine + 2 L-methionine + 2 reduced [2Fe-2S]-[ferredoxin]. Its pathway is protein modification; protein lipoylation via endogenous pathway; protein N(6)-(lipoyl)lysine from octanoyl-[acyl-carrier-protein]: step 2/2. Catalyzes the radical-mediated insertion of two sulfur atoms into the C-6 and C-8 positions of the octanoyl moiety bound to the lipoyl domains of lipoate-dependent enzymes, thereby converting the octanoylated domains into lipoylated derivatives. This Pseudoalteromonas translucida (strain TAC 125) protein is Lipoyl synthase.